Here is a 254-residue protein sequence, read N- to C-terminus: Large ribosomal subunit protein uL15m (254 aa).

The transit peptide at 1–78 (MFNILSRVCR…GSGQRRGRRI (78 aa)) directs the protein to the mitochondrion. A disordered region spans residues 44–104 (NYQSKKRVGR…KVGHSTGHLK (61 aa)). The segment covering 64–79 (GRGHKGSGQRRGRRIK) has biased composition (basic residues).

It belongs to the universal ribosomal protein uL15 family. In terms of assembly, component of the mitochondrial large ribosomal subunit (mt-LSU). Mature yeast 74S mitochondrial ribosomes consist of a small (37S) and a large (54S) subunit. The 37S small subunit contains a 15S ribosomal RNA (15S mt-rRNA) and at least 32 different proteins. The 54S large subunit contains a 21S rRNA (21S mt-rRNA) and at least 45 different proteins.

It is found in the mitochondrion. In terms of biological role, component of the mitochondrial ribosome (mitoribosome), a dedicated translation machinery responsible for the synthesis of mitochondrial genome-encoded proteins, including at least some of the essential transmembrane subunits of the mitochondrial respiratory chain. The mitoribosomes are attached to the mitochondrial inner membrane and translation products are cotranslationally integrated into the membrane. The chain is Large ribosomal subunit protein uL15m (mrpl10) from Schizosaccharomyces pombe (strain 972 / ATCC 24843) (Fission yeast).